Here is a 213-residue protein sequence, read N- to C-terminus: Kynurenine formamidase (213 aa).

Residue Trp-18 participates in substrate binding. Residues His-48, His-52, and Asp-54 each coordinate Zn(2+). Catalysis depends on His-58, which acts as the Proton donor/acceptor. Zn(2+) is bound by residues His-160 and Glu-172.

The protein belongs to the Cyclase 1 superfamily. KynB family. In terms of assembly, homodimer. Zn(2+) serves as cofactor.

It carries out the reaction N-formyl-L-kynurenine + H2O = L-kynurenine + formate + H(+). Its pathway is amino-acid degradation; L-tryptophan degradation via kynurenine pathway; L-kynurenine from L-tryptophan: step 2/2. Its function is as follows. Catalyzes the hydrolysis of N-formyl-L-kynurenine to L-kynurenine, the second step in the kynurenine pathway of tryptophan degradation. In Burkholderia pseudomallei (strain 668), this protein is Kynurenine formamidase.